The sequence spans 424 residues: Methylenetetrahydrofolate--tRNA-(uracil-5-)-methyltransferase TrmFO 1 (424 aa).

8 to 13 serves as a coordination point for FAD; it reads GAGLSG.

The protein belongs to the MnmG family. TrmFO subfamily. The cofactor is FAD.

Its subcellular location is the cytoplasm. The catalysed reaction is uridine(54) in tRNA + (6R)-5,10-methylene-5,6,7,8-tetrahydrofolate + NADH + H(+) = 5-methyluridine(54) in tRNA + (6S)-5,6,7,8-tetrahydrofolate + NAD(+). The enzyme catalyses uridine(54) in tRNA + (6R)-5,10-methylene-5,6,7,8-tetrahydrofolate + NADPH + H(+) = 5-methyluridine(54) in tRNA + (6S)-5,6,7,8-tetrahydrofolate + NADP(+). Its function is as follows. Catalyzes the folate-dependent formation of 5-methyl-uridine at position 54 (M-5-U54) in all tRNAs. In Mycoplasma mycoides subsp. mycoides SC (strain CCUG 32753 / NCTC 10114 / PG1), this protein is Methylenetetrahydrofolate--tRNA-(uracil-5-)-methyltransferase TrmFO 1.